The chain runs to 383 residues: S-adenosylmethionine synthase (383 aa).

Position 15 (His15) interacts with ATP. Asp17 is a Mg(2+) binding site. Glu43 is a binding site for K(+). Positions 56 and 99 each coordinate L-methionine. Positions Gln99–Arg109 are flexible loop. ATP contacts are provided by residues Asp164–Lys166, Arg230–Phe231, Asp239, Arg245–Lys246, Ala262, and Lys266. Position 239 (Asp239) interacts with L-methionine. An L-methionine-binding site is contributed by Lys270.

It belongs to the AdoMet synthase family. Homotetramer; dimer of dimers. Mg(2+) serves as cofactor. Requires K(+) as cofactor.

It localises to the cytoplasm. The enzyme catalyses L-methionine + ATP + H2O = S-adenosyl-L-methionine + phosphate + diphosphate. It functions in the pathway amino-acid biosynthesis; S-adenosyl-L-methionine biosynthesis; S-adenosyl-L-methionine from L-methionine: step 1/1. Catalyzes the formation of S-adenosylmethionine (AdoMet) from methionine and ATP. The overall synthetic reaction is composed of two sequential steps, AdoMet formation and the subsequent tripolyphosphate hydrolysis which occurs prior to release of AdoMet from the enzyme. This chain is S-adenosylmethionine synthase, found in Shewanella sp. (strain ANA-3).